Reading from the N-terminus, the 256-residue chain is 5-oxoprolinase subunit A (256 aa).

This sequence belongs to the LamB/PxpA family. Forms a complex composed of PxpA, PxpB and PxpC.

It carries out the reaction 5-oxo-L-proline + ATP + 2 H2O = L-glutamate + ADP + phosphate + H(+). Its function is as follows. Catalyzes the cleavage of 5-oxoproline to form L-glutamate coupled to the hydrolysis of ATP to ADP and inorganic phosphate. This is 5-oxoprolinase subunit A from Azoarcus sp. (strain BH72).